Here is a 285-residue protein sequence, read N- to C-terminus: Cyclin-Y-like protein 1B (285 aa).

The Cyclin N-terminal domain occupies 111–209 (PKRNCIFRHF…CFLELLEFNI (99 aa)).

This sequence belongs to the cyclin family. Cyclin Y subfamily.

The chain is Cyclin-Y-like protein 1B from Homo sapiens (Human).